Consider the following 315-residue polypeptide: Ribonuclease Z (315 aa).

His-61, His-63, Asp-65, His-66, His-151, Asp-219, and His-278 together coordinate Zn(2+). Asp-65 (proton acceptor) is an active-site residue.

This sequence belongs to the RNase Z family. Homodimer. It depends on Zn(2+) as a cofactor.

It catalyses the reaction Endonucleolytic cleavage of RNA, removing extra 3' nucleotides from tRNA precursor, generating 3' termini of tRNAs. A 3'-hydroxy group is left at the tRNA terminus and a 5'-phosphoryl group is left at the trailer molecule.. Its function is as follows. Zinc phosphodiesterase, which displays some tRNA 3'-processing endonuclease activity. Probably involved in tRNA maturation, by removing a 3'-trailer from precursor tRNA. This is Ribonuclease Z from Clostridium botulinum (strain Eklund 17B / Type B).